A 245-amino-acid chain; its full sequence is Rhamnosyl O-methyltransferase (245 aa).

The N-terminal stretch at 1-38 is a signal peptide; it reads MGLVWRSRTSLVGQLIGLVRLVASFAAQLFYRPSDAVA.

This sequence belongs to the rhamnosyl O-methyltransferase family.

Functionally, catalyzes the O-methylation of the hydroxyl group located on C-2 of the first rhamnosyl residue linked to the phenolic group of glycosylated phenolphthiocerol dimycocerosates (PGL) and p-hydroxybenzoic acid derivatives (p-HBAD). This chain is Rhamnosyl O-methyltransferase, found in Mycobacterium bovis (strain ATCC BAA-935 / AF2122/97).